The sequence spans 102 residues: MSRTENIEHVEESVESELKQPSMYKVILNNDDYTPMDFVIEILQLFFRKDEAQATEIMLAIHHKGKGICGIYPFGIAETKVAQVNQFARQNEHPLLCSLEEA.

This sequence belongs to the ClpS family. In terms of assembly, binds to the N-terminal domain of the chaperone ClpA.

In terms of biological role, involved in the modulation of the specificity of the ClpAP-mediated ATP-dependent protein degradation. The protein is ATP-dependent Clp protease adapter protein ClpS of Shewanella piezotolerans (strain WP3 / JCM 13877).